The following is a 295-amino-acid chain: Light-independent protochlorophyllide reductase iron-sulfur ATP-binding protein (295 aa).

ATP is bound by residues glycine 39–threonine 44 and lysine 68. Residue serine 43 coordinates Mg(2+). [4Fe-4S] cluster-binding residues include cysteine 124 and cysteine 158. ATP is bound by residues asparagine 209 to arginine 210 and proline 233 to leucine 235.

The protein belongs to the NifH/BchL/ChlL family. As to quaternary structure, homodimer. Protochlorophyllide reductase is composed of three subunits; BchL, BchN and BchB. [4Fe-4S] cluster serves as cofactor.

It carries out the reaction chlorophyllide a + oxidized 2[4Fe-4S]-[ferredoxin] + 2 ADP + 2 phosphate = protochlorophyllide a + reduced 2[4Fe-4S]-[ferredoxin] + 2 ATP + 2 H2O. It functions in the pathway porphyrin-containing compound metabolism; bacteriochlorophyll biosynthesis (light-independent). Its function is as follows. Component of the dark-operative protochlorophyllide reductase (DPOR) that uses Mg-ATP and reduced ferredoxin to reduce ring D of protochlorophyllide (Pchlide) to form chlorophyllide a (Chlide). This reaction is light-independent. The L component serves as a unique electron donor to the NB-component of the complex, and binds Mg-ATP. The polypeptide is Light-independent protochlorophyllide reductase iron-sulfur ATP-binding protein (Rhodospirillum rubrum (strain ATCC 11170 / ATH 1.1.1 / DSM 467 / LMG 4362 / NCIMB 8255 / S1)).